Reading from the N-terminus, the 111-residue chain is Cytochrome c6 (111 aa).

An N-terminal signal peptide occupies residues 1 to 25 (MKRLLSLIFLVFVFFAVMLTPPALA). Residues cysteine 39, cysteine 42, histidine 43, and methionine 83 each contribute to the heme c site.

This sequence belongs to the cytochrome c family. PetJ subfamily. As to quaternary structure, monomer. Post-translationally, binds 1 heme c group covalently per subunit.

The protein resides in the cellular thylakoid lumen. Functions as an electron carrier between membrane-bound cytochrome b6-f and photosystem I in oxygenic photosynthesis. This Rippkaea orientalis (strain PCC 8801 / RF-1) (Cyanothece sp. (strain PCC 8801)) protein is Cytochrome c6.